The following is a 723-amino-acid chain: Catalase-peroxidase (723 aa).

A cross-link (tryptophyl-tyrosyl-methioninium (Trp-Tyr) (with M-250)) is located at residues 96 to 224 (WHAAGTYRIQ…LAAVQMGLIY (129 aa)). His97 (proton acceptor) is an active-site residue. Positions 224–250 (YVNPEGVNSQPDPIKTGEQVRVTFARM) form a cross-link, tryptophyl-tyrosyl-methioninium (Tyr-Met) (with W-96). A heme b-binding site is contributed by His265.

It belongs to the peroxidase family. Peroxidase/catalase subfamily. In terms of assembly, homodimer or homotetramer. It depends on heme b as a cofactor. Post-translationally, formation of the three residue Trp-Tyr-Met cross-link is important for the catalase, but not the peroxidase activity of the enzyme.

The catalysed reaction is H2O2 + AH2 = A + 2 H2O. It carries out the reaction 2 H2O2 = O2 + 2 H2O. In terms of biological role, bifunctional enzyme with both catalase and broad-spectrum peroxidase activity. This is Catalase-peroxidase from Marinobacter nauticus (strain ATCC 700491 / DSM 11845 / VT8) (Marinobacter aquaeolei).